Here is an 885-residue protein sequence, read N- to C-terminus: Chitin synthase 3 (885 aa).

The tract at residues 1–59 (MASQYPGHQLDDIPSTNVYRPPPRHEDDEAEHALLHQNSAYQSQYDDPHSRPLTPGQES) is disordered. Residues 23 to 34 (PRHEDDEAEHAL) show a composition bias toward basic and acidic residues. The segment covering 36–45 (HQNSAYQSQY) has biased composition (polar residues). 6 consecutive transmembrane segments (helical) span residues 565–585 (FFLH…WFSL), 620–640 (IINT…FILA), 650–670 (VAYI…IVLS), 707–727 (IVII…FLYM), 735–755 (SFAQ…IYAF), and 837–857 (LVAT…SDSL).

The protein belongs to the chitin synthase family. Class III subfamily.

The protein resides in the cell membrane. The catalysed reaction is [(1-&gt;4)-N-acetyl-beta-D-glucosaminyl](n) + UDP-N-acetyl-alpha-D-glucosamine = [(1-&gt;4)-N-acetyl-beta-D-glucosaminyl](n+1) + UDP + H(+). Polymerizes chitin, a structural polymer of the cell wall and septum, by transferring the sugar moiety of UDP-GlcNAc to the non-reducing end of the growing chitin polymer. Is not only stable at different pH, but is also able to tolerate a broad temperature range. With CHS2, plays an important role in virulence. This Exophiala dermatitidis (Black yeast-like fungus) protein is Chitin synthase 3.